The chain runs to 161 residues: Putative outer membrane protein YedS (161 aa).

A signal peptide spans 1 to 21 (MKRKVLAMLVPALLVAGAANA).

It belongs to the Gram-negative porin family.

The protein localises to the cell outer membrane. The protein is Putative outer membrane protein YedS (yedS) of Escherichia coli (strain K12).